A 155-amino-acid chain; its full sequence is Small ribosomal subunit protein uS7cz/uS7cy (155 aa).

This sequence belongs to the universal ribosomal protein uS7 family. In terms of assembly, part of the 30S ribosomal subunit.

The protein localises to the plastid. It is found in the chloroplast. One of the primary rRNA binding proteins, it binds directly to 16S rRNA where it nucleates assembly of the head domain of the 30S subunit. This chain is Small ribosomal subunit protein uS7cz/uS7cy (rps7-A), found in Acorus calamus var. americanus (American sweet flag).